The primary structure comprises 579 residues: Glutamine--tRNA ligase (579 aa).

The 'HIGH' region signature appears at 41 to 51; it reads PEPNGYLHIGH. ATP contacts are provided by residues 42–44 and 48–54; these read EPN and HIGHAKA. Residues D74 and Y218 each contribute to the L-glutamine site. ATP is bound by residues T237, 285-286, and 293-295; these read RL and MSK. The 'KMSKS' region signature appears at 292–296; the sequence is VMSKR.

This sequence belongs to the class-I aminoacyl-tRNA synthetase family. Monomer.

It localises to the cytoplasm. It catalyses the reaction tRNA(Gln) + L-glutamine + ATP = L-glutaminyl-tRNA(Gln) + AMP + diphosphate. The sequence is that of Glutamine--tRNA ligase from Xanthomonas euvesicatoria pv. vesicatoria (strain 85-10) (Xanthomonas campestris pv. vesicatoria).